We begin with the raw amino-acid sequence, 463 residues long: Siroheme synthase (463 aa).

The segment at 1 to 203 (MDYLPLFHKL…GQGAEAERLL (203 aa)) is precorrin-2 dehydrogenase /sirohydrochlorin ferrochelatase. NAD(+) is bound by residues 22–23 (EI) and 43–44 (PD). The residue at position 128 (S128) is a Phosphoserine. Residues 216–463 (GEVYLVGAGP…LAWFEGSQNS (248 aa)) are uroporphyrinogen-III C-methyltransferase. P225 lines the S-adenosyl-L-methionine pocket. The Proton acceptor role is filled by D248. K270 functions as the Proton donor in the catalytic mechanism. S-adenosyl-L-methionine-binding positions include 301-303 (GGD), I306, 331-332 (TA), M383, and G412.

This sequence in the N-terminal section; belongs to the precorrin-2 dehydrogenase / sirohydrochlorin ferrochelatase family. In the C-terminal section; belongs to the precorrin methyltransferase family.

It carries out the reaction uroporphyrinogen III + 2 S-adenosyl-L-methionine = precorrin-2 + 2 S-adenosyl-L-homocysteine + H(+). The enzyme catalyses precorrin-2 + NAD(+) = sirohydrochlorin + NADH + 2 H(+). The catalysed reaction is siroheme + 2 H(+) = sirohydrochlorin + Fe(2+). It functions in the pathway cofactor biosynthesis; adenosylcobalamin biosynthesis; precorrin-2 from uroporphyrinogen III: step 1/1. It participates in cofactor biosynthesis; adenosylcobalamin biosynthesis; sirohydrochlorin from precorrin-2: step 1/1. Its pathway is porphyrin-containing compound metabolism; siroheme biosynthesis; precorrin-2 from uroporphyrinogen III: step 1/1. The protein operates within porphyrin-containing compound metabolism; siroheme biosynthesis; siroheme from sirohydrochlorin: step 1/1. It functions in the pathway porphyrin-containing compound metabolism; siroheme biosynthesis; sirohydrochlorin from precorrin-2: step 1/1. Functionally, multifunctional enzyme that catalyzes the SAM-dependent methylations of uroporphyrinogen III at position C-2 and C-7 to form precorrin-2 via precorrin-1. Then it catalyzes the NAD-dependent ring dehydrogenation of precorrin-2 to yield sirohydrochlorin. Finally, it catalyzes the ferrochelation of sirohydrochlorin to yield siroheme. In Pseudomonas putida (strain ATCC 700007 / DSM 6899 / JCM 31910 / BCRC 17059 / LMG 24140 / F1), this protein is Siroheme synthase.